Here is a 65-residue protein sequence, read N- to C-terminus: Large ribosomal subunit protein bL35 (65 aa).

Composition is skewed to basic residues over residues 1–15 (MPKM…KRFT) and 26–44 (QAFK…KRQL). Residues 1–65 (MPKMKTKKSA…KSVRAMMPYA (65 aa)) form a disordered region.

The protein belongs to the bacterial ribosomal protein bL35 family.

The protein is Large ribosomal subunit protein bL35 of Cupriavidus metallidurans (strain ATCC 43123 / DSM 2839 / NBRC 102507 / CH34) (Ralstonia metallidurans).